The following is a 327-amino-acid chain: MLNKFTDFIKIYCKSGDGGSGIIHFRKEKFINRGGPDGGDGGKGGNILIRGNNKLFTISHLKYKKHIIAENGKNGGRNRITGSNGKDSIIEVPIGTIVKDIYNNIIIEILNNNEEKILLFGGKGGKGNCHFKNSLCKTPFYSEKGESGKEFIFVLELKILADVGLIGLPNSGKSTLISMITSSKPKIDNYPFTTLNTNIGVLNYKNFKKIVIADIPGIIKGASKGKGLGFEFLKHIQRNKIIVFILSAEVIYYKKYYNIIINELNFFDKNILKKKRLLVISKSDLLDQELKYEIIKELPKFEKYIFISSFSKEGLYELIYYICNILS.

In terms of domain architecture, Obg spans 3–160; it reads NKFTDFIKIY…FIFVLELKIL (158 aa). The 167-residue stretch at 161-327 folds into the OBG-type G domain; that stretch reads ADVGLIGLPN…LIYYICNILS (167 aa). GTP-binding positions include 167–174, 192–196, 214–217, 281–284, and 308–310; these read GLPNSGKS, FTTLN, DIPG, SKSD, and SSF. Mg(2+) is bound by residues Ser174 and Thr194.

Belongs to the TRAFAC class OBG-HflX-like GTPase superfamily. OBG GTPase family. As to quaternary structure, monomer. Requires Mg(2+) as cofactor.

It localises to the cytoplasm. Functionally, an essential GTPase which binds GTP, GDP and possibly (p)ppGpp with moderate affinity, with high nucleotide exchange rates and a fairly low GTP hydrolysis rate. Plays a role in control of the cell cycle, stress response, ribosome biogenesis and in those bacteria that undergo differentiation, in morphogenesis control. In Karelsulcia muelleri (strain GWSS) (Sulcia muelleri), this protein is GTPase Obg.